Here is a 296-residue protein sequence, read N- to C-terminus: Giardin subunit alpha-3 (296 aa).

Annexin repeat units follow at residues 3 to 72, 74 to 146, 153 to 222, and 226 to 295; these read DTVT…SNCW, ELPV…TWIK, NNIN…TAHY, and GMNN…VLWR.

The protein belongs to the annexin family. Giardin subunit alpha subfamily.

It localises to the cytoplasm. It is found in the cytoskeleton. Functionally, giardins are involved in parasite attachment to the intestinal mucosa and in the cytoskeletal disassembly and reassembly that marks the transition from infectious trophozoite to transmissible cyst. They may interact with other cytoskeletal proteins such as microtubules in the microribbons or crossbridges, to maintain the integrity of the ventral disk. This chain is Giardin subunit alpha-3, found in Giardia intestinalis (Giardia lamblia).